The chain runs to 48 residues: Large ribosomal subunit protein bL32c (48 aa).

The protein belongs to the bacterial ribosomal protein bL32 family.

It is found in the plastid. The protein resides in the chloroplast. In Vicia faba (Broad bean), this protein is Large ribosomal subunit protein bL32c (rpl32).